The sequence spans 286 residues: D-tagatose-1,6-bisphosphate aldolase subunit KbaY (286 aa).

The active-site Proton donor is D82. Residues H83 and H180 each contribute to the Zn(2+) site. Dihydroxyacetone phosphate is bound at residue G181. H208 is a Zn(2+) binding site. Dihydroxyacetone phosphate contacts are provided by residues G209 to S211 and N230 to T233.

This sequence belongs to the class II fructose-bisphosphate aldolase family. TagBP aldolase KbaY subfamily. In terms of assembly, homotetramer. Forms a complex with KbaZ. Requires Zn(2+) as cofactor.

The enzyme catalyses D-tagatofuranose 1,6-bisphosphate = D-glyceraldehyde 3-phosphate + dihydroxyacetone phosphate. Its pathway is carbohydrate metabolism; D-tagatose 6-phosphate degradation; D-glyceraldehyde 3-phosphate and glycerone phosphate from D-tagatose 6-phosphate: step 2/2. In terms of biological role, catalytic subunit of the tagatose-1,6-bisphosphate aldolase KbaYZ, which catalyzes the reversible aldol condensation of dihydroxyacetone phosphate (DHAP or glycerone-phosphate) with glyceraldehyde 3-phosphate (G3P) to produce tagatose 1,6-bisphosphate (TBP). Requires KbaZ subunit for full activity and stability. This chain is D-tagatose-1,6-bisphosphate aldolase subunit KbaY, found in Escherichia coli O7:K1 (strain IAI39 / ExPEC).